The following is a 955-amino-acid chain: RNA polymerase-associated protein RapA (955 aa).

One can recognise a Helicase ATP-binding domain in the interval 163–333 (EVGHRYAPRV…FARLRLLDPE (171 aa)). 176–183 (DEVGLGKT) is an ATP binding site. Positions 279–282 (DEAH) match the DEAH box motif. The 165-residue stretch at 478–642 (RVEWLLELLL…AVRDELFELL (165 aa)) folds into the Helicase C-terminal domain.

It belongs to the SNF2/RAD54 helicase family. RapA subfamily. Interacts with the RNAP. Has a higher affinity for the core RNAP than for the holoenzyme. Its ATPase activity is stimulated by binding to RNAP.

Transcription regulator that activates transcription by stimulating RNA polymerase (RNAP) recycling in case of stress conditions such as supercoiled DNA or high salt concentrations. Probably acts by releasing the RNAP, when it is trapped or immobilized on tightly supercoiled DNA. Does not activate transcription on linear DNA. Probably not involved in DNA repair. The polypeptide is RNA polymerase-associated protein RapA (Aeromonas hydrophila subsp. hydrophila (strain ATCC 7966 / DSM 30187 / BCRC 13018 / CCUG 14551 / JCM 1027 / KCTC 2358 / NCIMB 9240 / NCTC 8049)).